The chain runs to 119 residues: MIRGIGVDVVDVARFARSAERTPGLVPRLFAPAERSLPTRSLAARFAAKEALIKALGGPGGISWQDMEVVRDAHGDPSFQVGGAVARVAAARGVTRIHLSMSHDAGLATAFVVTEGEGA.

Positions 8 and 50 each coordinate Mg(2+).

This sequence belongs to the P-Pant transferase superfamily. AcpS family. Mg(2+) is required as a cofactor.

The protein localises to the cytoplasm. The enzyme catalyses apo-[ACP] + CoA = holo-[ACP] + adenosine 3',5'-bisphosphate + H(+). Functionally, transfers the 4'-phosphopantetheine moiety from coenzyme A to a Ser of acyl-carrier-protein. This is Holo-[acyl-carrier-protein] synthase from Clavibacter sepedonicus (Clavibacter michiganensis subsp. sepedonicus).